Consider the following 194-residue polypeptide: Glycerol-3-phosphate acyltransferase (194 aa).

The next 5 membrane-spanning stretches (helical) occupy residues 4–24 (EIVLIIGAYLLGSIPTGLLLA), 78–98 (EIWVAATGLAAFLGHVYTVFL), 110–130 (LGVFIGISPLSVLAALAIFVF), 137–157 (YVSLASITAAAAIPFLVALIE), and 161–181 (LLITMSVIIAALVVFKHRENI).

Belongs to the PlsY family. In terms of assembly, probably interacts with PlsX.

The protein resides in the cell inner membrane. The catalysed reaction is an acyl phosphate + sn-glycerol 3-phosphate = a 1-acyl-sn-glycero-3-phosphate + phosphate. Its pathway is lipid metabolism; phospholipid metabolism. Catalyzes the transfer of an acyl group from acyl-phosphate (acyl-PO(4)) to glycerol-3-phosphate (G3P) to form lysophosphatidic acid (LPA). This enzyme utilizes acyl-phosphate as fatty acyl donor, but not acyl-CoA or acyl-ACP. In Geotalea daltonii (strain DSM 22248 / JCM 15807 / FRC-32) (Geobacter daltonii), this protein is Glycerol-3-phosphate acyltransferase.